A 280-amino-acid chain; its full sequence is Phosphatidylserine decarboxylase proenzyme (280 aa).

Residues D88, H144, and S247 each act as charge relay system; for autoendoproteolytic cleavage activity in the active site. Catalysis depends on S247, which acts as the Schiff-base intermediate with substrate; via pyruvic acid; for decarboxylase activity. S247 carries the pyruvic acid (Ser); by autocatalysis modification.

This sequence belongs to the phosphatidylserine decarboxylase family. PSD-B subfamily. Prokaryotic type I sub-subfamily. As to quaternary structure, heterodimer of a large membrane-associated beta subunit and a small pyruvoyl-containing alpha subunit. It depends on pyruvate as a cofactor. Post-translationally, is synthesized initially as an inactive proenzyme. Formation of the active enzyme involves a self-maturation process in which the active site pyruvoyl group is generated from an internal serine residue via an autocatalytic post-translational modification. Two non-identical subunits are generated from the proenzyme in this reaction, and the pyruvate is formed at the N-terminus of the alpha chain, which is derived from the carboxyl end of the proenzyme. The autoendoproteolytic cleavage occurs by a canonical serine protease mechanism, in which the side chain hydroxyl group of the serine supplies its oxygen atom to form the C-terminus of the beta chain, while the remainder of the serine residue undergoes an oxidative deamination to produce ammonia and the pyruvoyl prosthetic group on the alpha chain. During this reaction, the Ser that is part of the protease active site of the proenzyme becomes the pyruvoyl prosthetic group, which constitutes an essential element of the active site of the mature decarboxylase.

The protein resides in the cell membrane. It catalyses the reaction a 1,2-diacyl-sn-glycero-3-phospho-L-serine + H(+) = a 1,2-diacyl-sn-glycero-3-phosphoethanolamine + CO2. The protein operates within phospholipid metabolism; phosphatidylethanolamine biosynthesis; phosphatidylethanolamine from CDP-diacylglycerol: step 2/2. Functionally, catalyzes the formation of phosphatidylethanolamine (PtdEtn) from phosphatidylserine (PtdSer). The sequence is that of Phosphatidylserine decarboxylase proenzyme from Xanthomonas euvesicatoria pv. vesicatoria (strain 85-10) (Xanthomonas campestris pv. vesicatoria).